A 738-amino-acid polypeptide reads, in one-letter code: Eukaryotic translation initiation factor 3 subunit B (738 aa).

Residues 1-120 (MCGCVGVISN…LFIQFKTAQM (120 aa)) form a sufficient for interaction with HCR1 and TIF32 region. Residues 1-245 (MCGCVGVISN…GIQSWGGAQF (245 aa)) are sufficient for interaction with PIC8. The RRM domain maps to 59–146 (NFVVVDGAPI…HRLLVNKLSD (88 aa)). WD repeat units follow at residues 211–250 (PRKG…SISK), 322–360 (QKEM…LLDK), 363–406 (VKID…QTAR), and 537–579 (VVDK…ENVR).

The protein belongs to the eIF-3 subunit B family. As to quaternary structure, component of the eukaryotic translation initiation factor 3 (eIF-3) complex.

It is found in the cytoplasm. Its function is as follows. RNA-binding component of the eukaryotic translation initiation factor 3 (eIF-3) complex, which is involved in protein synthesis of a specialized repertoire of mRNAs and, together with other initiation factors, stimulates binding of mRNA and methionyl-tRNAi to the 40S ribosome. The eIF-3 complex specifically targets and initiates translation of a subset of mRNAs involved in cell proliferation. This Meyerozyma guilliermondii (strain ATCC 6260 / CBS 566 / DSM 6381 / JCM 1539 / NBRC 10279 / NRRL Y-324) (Yeast) protein is Eukaryotic translation initiation factor 3 subunit B.